The chain runs to 30 residues: Rothein 3.4 (30 aa).

Residue Leu-30 is modified to Leucine amide.

This sequence belongs to the frog skin active peptide (FSAP) family. Rothein subfamily. As to expression, expressed by the skin dorsal glands.

It localises to the secreted. Lacks antimicrobial activity. Does not inhibit the formation of NO by neuronal nitric oxide. This chain is Rothein 3.4, found in Litoria rothii (Roth's tree frog).